The chain runs to 466 residues: uncharacterized protein (466 aa).

Belongs to the myoviridae tail sheath protein family.

This is an uncharacterized protein from Bacillus subtilis (strain 168).